The chain runs to 354 residues: Gibberellin receptor GID1 (354 aa).

The Involved in the stabilization of the negatively charged intermediate by the formation of the oxyanion hole motif lies at His120–Gly122. Residues Gly122 to Ser123, Tyr134, Ser198, and Asp250 contribute to the gibberellin A3 site. Gibberellin A4 contacts are provided by residues Gly122–Ser123, Tyr134, and Ser198. Ser198 is an active-site residue. The active site involves Asp296. Gly327 contacts gibberellin A3. Residue Gly327 coordinates gibberellin A4.

It belongs to the 'GDXG' lipolytic enzyme family. As to quaternary structure, interacts with the DELLA protein SLR1 in a GA-dependent manner, resulting in subsequent SLR1 degradation.

Its subcellular location is the nucleus. Functionally, functions as a soluble gibberellin (GA) receptor. GA is an essential hormone that regulates growth and development in plants. Binds with high affinity the biologically active GAs such as GA1, GA3 and GA4, but has low or no affinity for the biologically inactive GAs. Upon GA-binding, it interacts with the DELLA protein SLR1, a repressor of GA signaling. This leads to SLR1 degradation by the proteasome, allowing the GA signaling pathway. The chain is Gibberellin receptor GID1 from Oryza sativa subsp. japonica (Rice).